A 106-amino-acid polypeptide reads, in one-letter code: Replication restart protein PriB (106 aa).

Residues 4–103 (VNRLVLSGTV…LHAEQIELID (100 aa)) enclose the SSB domain.

It belongs to the PriB family. As to quaternary structure, homodimer. Interacts with PriA and DnaT. Component of the replication restart primosome. Primosome assembly occurs via a 'hand-off' mechanism. PriA binds to replication forks, subsequently PriB then DnaT bind; DnaT then displaces ssDNA to generate the helicase loading substrate.

Functionally, involved in the restart of stalled replication forks, which reloads the replicative helicase on sites other than the origin of replication; the PriA-PriB pathway is the major replication restart pathway. During primosome assembly it facilitates complex formation between PriA and DnaT on DNA; stabilizes PriA on DNA. Stimulates the DNA unwinding activity of PriA helicase. This Pectobacterium carotovorum subsp. carotovorum (strain PC1) protein is Replication restart protein PriB.